A 175-amino-acid chain; its full sequence is S-fimbrial protein subunit SfaG (175 aa).

The first 27 residues, 1 to 27 (MVKDIIKTVTFSCMLAGSMFVTCHVCA), serve as a signal peptide directing secretion. Residues Cys-43 and Cys-83 are joined by a disulfide bond.

Belongs to the fimbrial protein family.

It is found in the fimbrium. Fimbriae (also called pili), polar filaments radiating from the surface of the bacterium to a length of 0.5-1.5 micrometers and numbering 100-300 per cell, enable bacteria to colonize the epithelium of specific host organs. Its function is as follows. A minor fimbrial subunit. This protein is necessary for full expression of S-specific binding. S-fimbrial adhesins enable pathogenic E.coli causing urinary-tract infections or newborn meningitis to attach to glycoproteins terminating with alpha-sialic acid-(2-3)-beta-Gal. The polypeptide is S-fimbrial protein subunit SfaG (sfaG) (Escherichia coli O6:K15:H31 (strain 536 / UPEC)).